We begin with the raw amino-acid sequence, 121 residues long: LOB domain-containing protein 24 (121 aa).

Positions 4-105 (KRCAACKYLR…NELAKTQAEI (102 aa)) constitute an LOB domain.

This sequence belongs to the LOB domain-containing protein family.

The polypeptide is LOB domain-containing protein 24 (LBD24) (Arabidopsis thaliana (Mouse-ear cress)).